Consider the following 373-residue polypeptide: Glutamate 5-kinase (373 aa).

Lys-12 is a binding site for ATP. 3 residues coordinate substrate: Ser-52, Asp-139, and Asn-154. Residue 216–222 coordinates ATP; the sequence is TGGMVTK. One can recognise a PUA domain in the interval 281-359; the sequence is RGSICVDDGA…QELNAVLGGN (79 aa).

Belongs to the glutamate 5-kinase family.

It is found in the cytoplasm. The catalysed reaction is L-glutamate + ATP = L-glutamyl 5-phosphate + ADP. It participates in amino-acid biosynthesis; L-proline biosynthesis; L-glutamate 5-semialdehyde from L-glutamate: step 1/2. Its function is as follows. Catalyzes the transfer of a phosphate group to glutamate to form L-glutamate 5-phosphate. This Dehalococcoides mccartyi (strain CBDB1) protein is Glutamate 5-kinase.